The primary structure comprises 102 residues: Iron-sulfur cluster assembly protein CyaY (102 aa).

The protein belongs to the frataxin family.

Functionally, involved in iron-sulfur (Fe-S) cluster assembly. May act as a regulator of Fe-S biogenesis. In Histophilus somni (strain 2336) (Haemophilus somnus), this protein is Iron-sulfur cluster assembly protein CyaY.